Consider the following 305-residue polypeptide: Glutaminase (305 aa).

Serine 61, asparagine 113, glutamate 158, asparagine 165, tyrosine 189, tyrosine 241, and valine 259 together coordinate substrate.

This sequence belongs to the glutaminase family. In terms of assembly, homotetramer.

It carries out the reaction L-glutamine + H2O = L-glutamate + NH4(+). This chain is Glutaminase, found in Clostridium botulinum (strain Loch Maree / Type A3).